We begin with the raw amino-acid sequence, 468 residues long: Histone acetyltransferase type B catalytic subunit (468 aa).

Serine 8 is modified (phosphoserine). Interaction with histone H4 N-terminus stretches follow at residues 44 to 46 (EEE) and 208 to 210 (YKF). Acetyl-CoA is bound by residues 248-250 (FLI) and 255-261 (QKSGNGS). Glutamate 283 functions as the Proton donor/acceptor in the catalytic mechanism. The interval 442–468 (SSNLKRKLDDDENTEGSSSKKARVEDA) is disordered.

It belongs to the HAT1 family. As to quaternary structure, component of the HAT-B complex composed of at least HAT1 and HAT2. The HAT-B complex binds to histone H4 tail. In the nucleus, interacts with GSK1 and SSB1. In the cytoplasm, interacts with ATG3 and ATG9. Post-translationally, phosphorylated at Ser-8 by GSK1 in the nucleus which impairs its translocation to the cytoplasm through interfering the interaction between HAT1 and SSB1. Dephosphorylation under nutrient starvation conditions promotes the interaction between HAT1 and SSB1 and results in the translocation of HAT1 from the nucleus to the cytoplasm in order to acetylate ATG3 and ATG9.

It localises to the nucleus. Its subcellular location is the cytoplasm. It is found in the preautophagosomal structure. It carries out the reaction L-lysyl-[protein] + acetyl-CoA = N(6)-acetyl-L-lysyl-[protein] + CoA + H(+). In terms of biological role, catalytic component of the histone acetylase B (HAT-B) complex. Has intrinsic substrate specificity that modifies lysine in recognition sequence GXGKXG. Involved in DNA double-strand break repair. Required for appressorium turgor pressure, autophagy and conidial nuclear degradation. During the germination process and upon starvation conditions, translocates from the nucleus to the cytoplasm where it acetylates ATG3 at 'lys-262' and 'Lys-267', thus influencing autophagy through controlling ATG3-ATG8 interaction. Also acetylates ATG9 at 'Lys-621' to regulate ATG9 binding to vesicles, which is also important for autophagy and pathogenicity. The protein is Histone acetyltransferase type B catalytic subunit of Pyricularia oryzae (strain 70-15 / ATCC MYA-4617 / FGSC 8958) (Rice blast fungus).